The sequence spans 116 residues: Large ribosomal subunit protein bL20 (116 aa).

It belongs to the bacterial ribosomal protein bL20 family.

Functionally, binds directly to 23S ribosomal RNA and is necessary for the in vitro assembly process of the 50S ribosomal subunit. It is not involved in the protein synthesizing functions of that subunit. The chain is Large ribosomal subunit protein bL20 from Synechococcus elongatus (strain ATCC 33912 / PCC 7942 / FACHB-805) (Anacystis nidulans R2).